Consider the following 389-residue polypeptide: Nucleic acid dioxygenase ALKBH1 (389 aa).

The segment at 1-127 (MGKMAAAVAS…CLKLYSQKPN (127 aa)) is interaction with DNAJB6. Positions 86 to 389 (SKWRAYGLEG…VKRKRLNPNS (304 aa)) are tRNA-binding. Substrate is bound by residues Trp-144 and 175–177 (YHY). One can recognise a Fe2OG dioxygenase domain in the interval 213-347 (QAEAGILNYY…RVNMTVRQVL (135 aa)). 220 to 222 (NYY) serves as a coordination point for 2-oxoglutarate. Fe cation is bound by residues His-231, Asp-233, and His-287. Asp-233 is a substrate binding site. 338-344 (RVNMTVR) contacts 2-oxoglutarate.

As to quaternary structure, monomer. Interacts with DNAJB6. The cofactor is Fe(2+). In terms of tissue distribution, in adult organs, highly expressed in testis, eye, brain and kidney.

It localises to the nucleus. It catalyses the reaction an N(6)-methyl-2'-deoxyadenosine in DNA + 2-oxoglutarate + O2 = a 2'-deoxyadenosine in DNA + formaldehyde + succinate + CO2. The catalysed reaction is 2'-deoxyribonucleotide-(2'-deoxyribose 5'-phosphate)-2'-deoxyribonucleotide-DNA = a 3'-end 2'-deoxyribonucleotide-(2,3-dehydro-2,3-deoxyribose 5'-phosphate)-DNA + a 5'-end 5'-phospho-2'-deoxyribonucleoside-DNA + H(+). It carries out the reaction a methylated nucleobase within DNA + 2-oxoglutarate + O2 = a nucleobase within DNA + formaldehyde + succinate + CO2. The enzyme catalyses an N(1)-methyladenosine in tRNA + 2-oxoglutarate + O2 = an adenosine in tRNA + formaldehyde + succinate + CO2. It catalyses the reaction 5-methylcytidine(34) in mitochondrial tRNA(Met) + 2 2-oxoglutarate + 2 O2 = 5-formylcytidine(34) in mitochondrial tRNA(Met) + 2 succinate + 2 CO2 + H2O. The catalysed reaction is an N(3)-methylcytidine in mRNA + 2-oxoglutarate + O2 = a cytidine in mRNA + formaldehyde + succinate + CO2. It carries out the reaction N(1)-methyladenosine(58) in tRNA + 2-oxoglutarate + O2 = adenosine(58) in tRNA + formaldehyde + succinate + CO2. Dioxygenase that acts on nucleic acids, such as DNA and tRNA. Requires molecular oxygen, alpha-ketoglutarate and iron. A number of activities have been described for this dioxygenase, but recent results suggest that it mainly acts on tRNAs and mediates their demethylation or oxidation depending on the context and subcellular compartment. Mainly acts as a tRNA demethylase by removing N(1)-methyladenine from various tRNAs, with a preference for N(1)-methyladenine at position 58 (m1A58) present on a stem loop structure of tRNAs. Acts as a regulator of translation initiation and elongation in response to glucose deprivation: regulates both translation initiation, by mediating demethylation of tRNA(Met), and translation elongation, N(1)-methyladenine-containing tRNAs being preferentially recruited to polysomes to promote translation elongation. In mitochondrion, specifically interacts with mt-tRNA(Met) and mediates oxidation of mt-tRNA(Met) methylated at cytosine(34) to form 5-formylcytosine (f(5)c) at this position. mt-tRNA(Met) containing the f(5)c modification at the wobble position enables recognition of the AUA codon in addition to the AUG codon, expanding codon recognition in mitochondrial translation. Specifically demethylates DNA methylated on the 6th position of adenine (N(6)-methyladenosine) DNA. N(6)-methyladenosine (m6A) DNA is present at some L1 elements in embryonic stem cells and probably promotes their silencing. Demethylates mRNAs containing N(3)-methylcytidine modification. Also able to repair alkylated single-stranded DNA by oxidative demethylation, but with low activity. Also has DNA lyase activity and introduces double-stranded breaks at abasic sites: cleaves both single-stranded DNA and double-stranded DNA at abasic sites, with the greatest activity towards double-stranded DNA with two abasic sites. DNA lyase activity does not require alpha-ketoglutarate and iron and leads to the formation of an irreversible covalent protein-DNA adduct with the 5' DNA product. DNA lyase activity is not required during base excision repair and class switch recombination of the immunoglobulin heavy chain during B lymphocyte activation. May play a role in placental trophoblast lineage differentiation. The polypeptide is Nucleic acid dioxygenase ALKBH1 (Mus musculus (Mouse)).